Reading from the N-terminus, the 192-residue chain is Orotate phosphoribosyltransferase (192 aa).

Position 116-124 (116-124 (EDIVTTGLS)) interacts with 5-phospho-alpha-D-ribose 1-diphosphate. Residues threonine 120 and arginine 148 each coordinate orotate.

It belongs to the purine/pyrimidine phosphoribosyltransferase family. PyrE subfamily. As to quaternary structure, homodimer. It depends on Mg(2+) as a cofactor.

It carries out the reaction orotidine 5'-phosphate + diphosphate = orotate + 5-phospho-alpha-D-ribose 1-diphosphate. It participates in pyrimidine metabolism; UMP biosynthesis via de novo pathway; UMP from orotate: step 1/2. Catalyzes the transfer of a ribosyl phosphate group from 5-phosphoribose 1-diphosphate to orotate, leading to the formation of orotidine monophosphate (OMP). The sequence is that of Orotate phosphoribosyltransferase from Bartonella quintana (strain Toulouse) (Rochalimaea quintana).